The sequence spans 258 residues: Imidazole glycerol phosphate synthase subunit HisF (258 aa).

Catalysis depends on residues D11 and D130.

This sequence belongs to the HisA/HisF family. Heterodimer of HisH and HisF.

It is found in the cytoplasm. The catalysed reaction is 5-[(5-phospho-1-deoxy-D-ribulos-1-ylimino)methylamino]-1-(5-phospho-beta-D-ribosyl)imidazole-4-carboxamide + L-glutamine = D-erythro-1-(imidazol-4-yl)glycerol 3-phosphate + 5-amino-1-(5-phospho-beta-D-ribosyl)imidazole-4-carboxamide + L-glutamate + H(+). It functions in the pathway amino-acid biosynthesis; L-histidine biosynthesis; L-histidine from 5-phospho-alpha-D-ribose 1-diphosphate: step 5/9. IGPS catalyzes the conversion of PRFAR and glutamine to IGP, AICAR and glutamate. The HisF subunit catalyzes the cyclization activity that produces IGP and AICAR from PRFAR using the ammonia provided by the HisH subunit. The sequence is that of Imidazole glycerol phosphate synthase subunit HisF from Xanthomonas campestris pv. campestris (strain B100).